The following is a 249-amino-acid chain: NAD(P)H-quinone oxidoreductase subunit K (249 aa).

Positions 65, 66, 130, and 161 each coordinate [4Fe-4S] cluster.

Belongs to the complex I 20 kDa subunit family. NDH-1 can be composed of about 15 different subunits; different subcomplexes with different compositions have been identified which probably have different functions. [4Fe-4S] cluster serves as cofactor.

The protein localises to the cellular thylakoid membrane. It catalyses the reaction a plastoquinone + NADH + (n+1) H(+)(in) = a plastoquinol + NAD(+) + n H(+)(out). The catalysed reaction is a plastoquinone + NADPH + (n+1) H(+)(in) = a plastoquinol + NADP(+) + n H(+)(out). In terms of biological role, NDH-1 shuttles electrons from an unknown electron donor, via FMN and iron-sulfur (Fe-S) centers, to quinones in the respiratory and/or the photosynthetic chain. The immediate electron acceptor for the enzyme in this species is believed to be plastoquinone. Couples the redox reaction to proton translocation, and thus conserves the redox energy in a proton gradient. Cyanobacterial NDH-1 also plays a role in inorganic carbon-concentration. The chain is NAD(P)H-quinone oxidoreductase subunit K from Prochlorococcus marinus (strain NATL2A).